We begin with the raw amino-acid sequence, 388 residues long: S-adenosylmethionine synthase (388 aa).

ATP is bound at residue H17. Position 19 (D19) interacts with Mg(2+). E45 serves as a coordination point for K(+). L-methionine-binding residues include E58 and Q106. The tract at residues 106-116 is flexible loop; that stretch reads QSAHISQGVDR. Residues 166-168, D241, 247-248, A264, and K268 each bind ATP; these read DAK and RK. Position 241 (D241) interacts with L-methionine. Residue K272 coordinates L-methionine.

This sequence belongs to the AdoMet synthase family. As to quaternary structure, homotetramer; dimer of dimers. Mg(2+) serves as cofactor. The cofactor is K(+).

It localises to the cytoplasm. The enzyme catalyses L-methionine + ATP + H2O = S-adenosyl-L-methionine + phosphate + diphosphate. Its pathway is amino-acid biosynthesis; S-adenosyl-L-methionine biosynthesis; S-adenosyl-L-methionine from L-methionine: step 1/1. Catalyzes the formation of S-adenosylmethionine (AdoMet) from methionine and ATP. The overall synthetic reaction is composed of two sequential steps, AdoMet formation and the subsequent tripolyphosphate hydrolysis which occurs prior to release of AdoMet from the enzyme. This Paracoccus denitrificans (strain Pd 1222) protein is S-adenosylmethionine synthase.